The primary structure comprises 77 residues: EMBRYO SURROUNDING FACTOR 1-like protein 9 (77 aa).

The first 22 residues, 1–22 (MSSSRFLILCIILISFFPLHEC), serve as a signal peptide directing secretion. Cystine bridges form between Cys-38–Cys-54, Cys-43–Cys-75, Cys-52–Cys-71, and Cys-55–Cys-64.

The protein belongs to the MEG family. As to expression, expressed in flowers.

In Arabidopsis thaliana (Mouse-ear cress), this protein is EMBRYO SURROUNDING FACTOR 1-like protein 9 (ESFL9).